The sequence spans 215 residues: Probable serine/threonine-protein kinase 2 (215 aa).

The 205-residue stretch at 1–205 (MKPEQLVYLN…WLLKEMEQLL (205 aa)) folds into the Protein kinase domain.

Belongs to the protein kinase superfamily. Ser/Thr protein kinase family. In terms of assembly, interacts with the kinase domain of host EIF2AK2.

The protein localises to the host cytoplasm. The enzyme catalyses L-seryl-[protein] + ATP = O-phospho-L-seryl-[protein] + ADP + H(+). The catalysed reaction is L-threonyl-[protein] + ATP = O-phospho-L-threonyl-[protein] + ADP + H(+). Functionally, plays a role in the inhibition of host eIF2alpha/EIF2S1 phosphorylation, thereby increasing viral fitness. In the insect host, targets the endogenous insect heme-regulated inhibitor (HRI)-like eIF2alpha kinase. The sequence is that of Probable serine/threonine-protein kinase 2 (PK2) from Autographa californica nuclear polyhedrosis virus (AcMNPV).